A 260-amino-acid polypeptide reads, in one-letter code: Carbonic anhydrase 2 (260 aa).

Ser-2 carries the post-translational modification N-acetylserine. Ser-2 is subject to Phosphoserine. Residues 3–259 (HHWGYGKHNG…LKNRQVRGFP (257 aa)) form the Alpha-carbonic anhydrase domain. Residue His-64 is the Proton donor/acceptor of the active site. Zn(2+)-binding residues include His-94, His-96, and His-119. A phosphoserine mark is found at Ser-165 and Ser-172. Residue 198–199 (TT) coordinates substrate.

The protein belongs to the alpha-carbonic anhydrase family. In terms of assembly, interacts with SLC4A4. Interaction with SLC4A7 regulates SLC4A7 transporter activity. The cofactor is Zn(2+).

Its subcellular location is the cytoplasm. The protein resides in the cell membrane. The enzyme catalyses hydrogencarbonate + H(+) = CO2 + H2O. It catalyses the reaction urea = cyanamide + H2O. With respect to regulation, inhibited by acetazolamide. Catalyzes the reversible hydration of carbon dioxide. Can also hydrate cyanamide to urea. Involved in the regulation of fluid secretion into the anterior chamber of the eye. Essential for bone resorption and osteoclast differentiation. Contributes to intracellular pH regulation in the duodenal upper villous epithelium during proton-coupled peptide absorption. Stimulates the chloride-bicarbonate exchange activity of SLC26A6. This chain is Carbonic anhydrase 2 (CA2), found in Bos taurus (Bovine).